The following is a 151-amino-acid chain: MITIEDFKIKHTNKVRFIGLDLGSKRIGVSICDERQSIATPFKTINKTNTNELIDELKIIIKDNNIGGIIVGNPVNMDGSLGRSAQSVNDVASNISKSIDLPVILWDERLSTVGAFNLSSLLDVNVSKRVKTIDQNAAAFILQGAIDFLNN.

It belongs to the YqgF nuclease family.

The protein resides in the cytoplasm. Its function is as follows. Could be a nuclease involved in processing of the 5'-end of pre-16S rRNA. This chain is Putative pre-16S rRNA nuclease, found in Pelagibacter ubique (strain HTCC1062).